The following is a 116-amino-acid chain: Ribosome-binding factor A (116 aa).

Belongs to the RbfA family. As to quaternary structure, monomer. Binds 30S ribosomal subunits, but not 50S ribosomal subunits or 70S ribosomes.

The protein resides in the cytoplasm. Functionally, one of several proteins that assist in the late maturation steps of the functional core of the 30S ribosomal subunit. Associates with free 30S ribosomal subunits (but not with 30S subunits that are part of 70S ribosomes or polysomes). Required for efficient processing of 16S rRNA. May interact with the 5'-terminal helix region of 16S rRNA. This chain is Ribosome-binding factor A, found in Ureaplasma parvum serovar 3 (strain ATCC 27815 / 27 / NCTC 11736).